Here is a 137-residue protein sequence, read N- to C-terminus: Small ribosomal subunit protein bS6 (137 aa).

The disordered stretch occupies residues 96–137 (ITEASPMAKAKDERDTRRSSEERAPRAEATEEVKESAENTAE). The segment covering 104–137 (KAKDERDTRRSSEERAPRAEATEEVKESAENTAE) has biased composition (basic and acidic residues).

This sequence belongs to the bacterial ribosomal protein bS6 family.

Functionally, binds together with bS18 to 16S ribosomal RNA. This Shewanella piezotolerans (strain WP3 / JCM 13877) protein is Small ribosomal subunit protein bS6.